A 474-amino-acid chain; its full sequence is tRNA-2-methylthio-N(6)-dimethylallyladenosine synthase (474 aa).

Residues 3 to 120 (KKLHIKTWGC…LPDMIEQVRR (118 aa)) form the MTTase N-terminal domain. [4Fe-4S] cluster is bound by residues cysteine 12, cysteine 49, cysteine 83, cysteine 157, cysteine 161, and cysteine 164. One can recognise a Radical SAM core domain in the interval 143–375 (RAEGPTAFVS…QDRITQQAMR (233 aa)). Residues 378 to 441 (RHMMGTVQRI…TNSLRGKFIR (64 aa)) form the TRAM domain.

The protein belongs to the methylthiotransferase family. MiaB subfamily. In terms of assembly, monomer. The cofactor is [4Fe-4S] cluster.

The protein localises to the cytoplasm. It carries out the reaction N(6)-dimethylallyladenosine(37) in tRNA + (sulfur carrier)-SH + AH2 + 2 S-adenosyl-L-methionine = 2-methylsulfanyl-N(6)-dimethylallyladenosine(37) in tRNA + (sulfur carrier)-H + 5'-deoxyadenosine + L-methionine + A + S-adenosyl-L-homocysteine + 2 H(+). Catalyzes the methylthiolation of N6-(dimethylallyl)adenosine (i(6)A), leading to the formation of 2-methylthio-N6-(dimethylallyl)adenosine (ms(2)i(6)A) at position 37 in tRNAs that read codons beginning with uridine. This is tRNA-2-methylthio-N(6)-dimethylallyladenosine synthase from Shewanella sp. (strain MR-4).